Consider the following 852-residue polypeptide: Envelope glycoprotein gp160 (852 aa).

A signal peptide spans 1–32 (MRVKGIKKNYQHLWRWGGMMLLGILMICSATD). Residues 33–680 (KLWVTVYYGV…ITNWLWYIKI (648 aa)) lie on the Extracellular side of the membrane. N-linked (GlcNAc...) asparagine; by host glycosylation is present at Asn-49. Cys-54 and Cys-74 are joined by a disulfide. Asn-88, Asn-135, Asn-138, Asn-154, Asn-158, Asn-197, Asn-234, Asn-241, Asn-262, Asn-276, Asn-289, Asn-295, Asn-301, Asn-331, Asn-354, and Asn-360 each carry an N-linked (GlcNAc...) asparagine; by host glycan. 5 disulfide bridges follow: Cys-119-Cys-205, Cys-126-Cys-196, Cys-131-Cys-155, Cys-218-Cys-247, and Cys-228-Cys-239. Residues 131 to 154 (CHDFNATNATSNSGKMMEGGEMKN) form a V1 region. The tract at residues 155-196 (CSFNITTSIRDKMQKEYALFYKLDIVPIDNDKTNTRYRLISC) is V2. Positions 296-329 (CTRPNNNTRKRITMGPGRVYYTTGQIIGDIRRAH) are V3. Cys-296 and Cys-330 form a disulfide bridge. Residues 362–372 (SSGGDPEIVMH) form a CD4-binding loop region. 2 disulfides stabilise this stretch: Cys-376–Cys-439 and Cys-383–Cys-412. The interval 383–412 (CNTTQLFNSTWYRNTTGNITEGNSPITLPC) is V4. 6 N-linked (GlcNAc...) asparagine; by host glycosylation sites follow: Asn-384, Asn-390, Asn-396, Asn-400, Asn-442, and Asn-456. 2 V5 regions span residues 454-467 (NNNE…FRPG) and 457-467 (ETTDTEIFRPG). Residues 508–528 (AVGLGALFLGFLGAAGSTMGA) are fusion peptide. The interval 570-588 (KQLQARVLAVERYLKDQQL) is immunosuppression. Cysteines 594 and 600 form a disulfide. Residues Asn-607, Asn-612, Asn-621, Asn-633, and Asn-670 are each glycosylated (N-linked (GlcNAc...) asparagine; by host). Residues 629–663 (REIDNYTNLIYSLIEDSQIQQEKNEKELLELDKWA) are a coiled coil. Residues 658–679 (ELDKWASLWNWFNITNWLWYIK) form an MPER; binding to GalCer region. A helical transmembrane segment spans residues 681–701 (FIMIVGGLIGLRIVFAVLSIV). At 702 to 852 (NRVRQGYSPL…IRQGLERALQ (151 aa)) the chain is on the cytoplasmic side. Positions 708 to 711 (YSPL) match the YXXL motif; contains endocytosis signal motif. Positions 715–741 (TRLPGRRGPDRPEGIEEEGGERDRDRS) are disordered.

This sequence belongs to the HIV-1 env protein family. As to quaternary structure, the mature envelope protein (Env) consists of a homotrimer of non-covalently associated gp120-gp41 heterodimers. The resulting complex protrudes from the virus surface as a spike. There seems to be as few as 10 spikes on the average virion. Interacts with host CD4, CCR5 and CXCR4. Gp120 also interacts with the C-type lectins CD209/DC-SIGN and CLEC4M/DC-SIGNR (collectively referred to as DC-SIGN(R)). Gp120 and gp41 interact with GalCer. Gp120 interacts with host ITGA4/ITGB7 complex; on CD4+ T-cells, this interaction results in rapid activation of integrin ITGAL/LFA-1, which facilitates efficient cell-to-cell spreading of HIV-1. Gp120 interacts with cell-associated heparan sulfate; this interaction increases virus infectivity on permissive cells and may be involved in infection of CD4- cells. The mature envelope protein (Env) consists of a homotrimer of non-covalently associated gp120-gp41 heterodimers. The resulting complex protrudes from the virus surface as a spike. There seems to be as few as 10 spikes on the average virion. Highly glycosylated by host. The high number of glycan on the protein is reffered to as 'glycan shield' because it contributes to hide protein sequence from adaptive immune system. Post-translationally, palmitoylation of the transmembrane protein and of Env polyprotein (prior to its proteolytic cleavage) is essential for their association with host cell membrane lipid rafts. Palmitoylation is therefore required for envelope trafficking to classical lipid rafts, but not for viral replication. In terms of processing, specific enzymatic cleavages in vivo yield mature proteins. Envelope glycoproteins are synthesized as an inactive precursor that is heavily N-glycosylated and processed likely by host cell furin in the Golgi to yield the mature SU and TM proteins. The cleavage site between SU and TM requires the minimal sequence [KR]-X-[KR]-R. About 2 of the 9 disulfide bonds of gp41 are reduced by P4HB/PDI, following binding to CD4 receptor.

It is found in the virion membrane. The protein resides in the host cell membrane. Its subcellular location is the host endosome membrane. Oligomerizes in the host endoplasmic reticulum into predominantly trimers. In a second time, gp160 transits in the host Golgi, where glycosylation is completed. The precursor is then proteolytically cleaved in the trans-Golgi and thereby activated by cellular furin or furin-like proteases to produce gp120 and gp41. Functionally, attaches the virus to the host lymphoid cell by binding to the primary receptor CD4. This interaction induces a structural rearrangement creating a high affinity binding site for a chemokine coreceptor like CXCR4 and/or CCR5. Acts as a ligand for CD209/DC-SIGN and CLEC4M/DC-SIGNR, which are respectively found on dendritic cells (DCs), and on endothelial cells of liver sinusoids and lymph node sinuses. These interactions allow capture of viral particles at mucosal surfaces by these cells and subsequent transmission to permissive cells. HIV subverts the migration properties of dendritic cells to gain access to CD4+ T-cells in lymph nodes. Virus transmission to permissive T-cells occurs either in trans (without DCs infection, through viral capture and transmission), or in cis (following DCs productive infection, through the usual CD4-gp120 interaction), thereby inducing a robust infection. In trans infection, bound virions remain infectious over days and it is proposed that they are not degraded, but protected in non-lysosomal acidic organelles within the DCs close to the cell membrane thus contributing to the viral infectious potential during DCs' migration from the periphery to the lymphoid tissues. On arrival at lymphoid tissues, intact virions recycle back to DCs' cell surface allowing virus transmission to CD4+ T-cells. Its function is as follows. Acts as a class I viral fusion protein. Under the current model, the protein has at least 3 conformational states: pre-fusion native state, pre-hairpin intermediate state, and post-fusion hairpin state. During fusion of viral and target intracellular membranes, the coiled coil regions (heptad repeats) assume a trimer-of-hairpins structure, positioning the fusion peptide in close proximity to the C-terminal region of the ectodomain. The formation of this structure appears to drive apposition and subsequent fusion of viral and target cell membranes. Complete fusion occurs in host cell endosomes and is dynamin-dependent, however some lipid transfer might occur at the plasma membrane. The virus undergoes clathrin-dependent internalization long before endosomal fusion, thus minimizing the surface exposure of conserved viral epitopes during fusion and reducing the efficacy of inhibitors targeting these epitopes. Membranes fusion leads to delivery of the nucleocapsid into the cytoplasm. This chain is Envelope glycoprotein gp160, found in Human immunodeficiency virus type 1 group M subtype B (isolate BRVA) (HIV-1).